Here is a 189-residue protein sequence, read N- to C-terminus: Putative OVARIAN TUMOR DOMAIN-containing deubiquitinating enzyme 8 (189 aa).

The OTU domain occupies 1–103; the sequence is MMKSDGNCQF…GIHFNSIYKK (103 aa). Asp-5 is a catalytic residue. Cys-8 (nucleophile) is an active-site residue. His-96 is a catalytic residue. The interval 105–189 is disordered; the sequence is KEKGSRSSSS…NRNHHFHYSE (85 aa). Positions 120–181 form a coiled coil; sequence WMKLQRKKEN…KKEKKEKKNR (62 aa). 2 short sequence motifs (nuclear localization signal) span residues 125–132 and 163–170; these read RKKENEAK and KKKAKVQK. Residues 126–174 are compositionally biased toward basic and acidic residues; it reads KKENEAKKKEEEEKERKDMEKEEKKKDKEDKKKDKEDKKKAKVQKEKKE. The span at 175 to 189 shows a compositional bias: basic residues; it reads KKEKKNRNHHFHYSE.

This sequence belongs to the peptidase C85 family.

The protein resides in the nucleus. It catalyses the reaction Thiol-dependent hydrolysis of ester, thioester, amide, peptide and isopeptide bonds formed by the C-terminal Gly of ubiquitin (a 76-residue protein attached to proteins as an intracellular targeting signal).. In terms of biological role, hydrolase that can remove conjugated ubiquitin from proteins in vitro and may therefore play an important regulatory role at the level of protein turnover by preventing degradation. This is Putative OVARIAN TUMOR DOMAIN-containing deubiquitinating enzyme 8 from Arabidopsis thaliana (Mouse-ear cress).